The sequence spans 111 residues: MDHRDINTNMEALREVLRYKNKVAGHGFLFDDGDLVWREEDDATWRRLCDVVNALISSKRMQRVLYMDLSITKGEGHLLFVDLQGTKNRLHKEPRFRRHLILIEDFLAYPR.

It belongs to the novirhabdovirus NV protein family.

In terms of biological role, plays an essential role for the viral pathogenicity. The protein is Non-virion protein (NV) of Infectious hematopoietic necrosis virus (strain Oregon69) (IHNV).